The chain runs to 404 residues: 6-deoxyerythronolide B hydroxylase (404 aa).

Heme is bound at residue cysteine 351.

The protein belongs to the cytochrome P450 family. The cofactor is heme.

Its subcellular location is the cytoplasm. The catalysed reaction is 6-deoxyerythronolide B + 2 reduced [2Fe-2S]-[ferredoxin] + O2 + 2 H(+) = erythronolide B + 2 oxidized [2Fe-2S]-[ferredoxin] + H2O. The protein operates within antibiotic biosynthesis; erythromycin biosynthesis. Functionally, catalyzes the conversion of 6-deoxyerythronolide B (6-DEB) to erythronolide B (EB) by the insertion of an oxygen at the 6S position of 6-DEB. Requires the participation of a ferredoxin and a ferredoxin reductase for the transfer of electrons from NADPH to the monooxygenase. This Saccharopolyspora erythraea (strain ATCC 11635 / DSM 40517 / JCM 4748 / NBRC 13426 / NCIMB 8594 / NRRL 2338) protein is 6-deoxyerythronolide B hydroxylase.